A 422-amino-acid polypeptide reads, in one-letter code: O-methyltransferase kk1A (422 aa).

An S-adenosyl-L-methionine-binding site is contributed by Asp-277. His-320 functions as the Proton acceptor in the catalytic mechanism.

Belongs to the class I-like SAM-binding methyltransferase superfamily. Cation-independent O-methyltransferase family.

Its pathway is secondary metabolite biosynthesis. Its function is as follows. O-methyltransferase; part of the gene cluster that mediates the biosynthesis of KK-1, a novel cyclic depsipeptide with 10 residues which is a promising active compound with high activity against many plant pathogens, especially Botrytis cinerea. Within the pathway, kk1A is responsible for the O-methylation of tyrosine as a free amino acid before its activation as an aminoacyl-AMP by the corresponding A domain of kk1B. The nonribosomal peptide synthetase (NRPS) kk1B catalyzes the elongation and cyclization of the decapeptide chain composed of 1 D-lactic acid residue (D-Lac), 1 pipecolic acid residue (Pip), 1 aspartic acid residue (Asp), 1 isoleucine residue (Ile), 1 glycine residue (Gly), 1 tyrosine residue (Tyr) and 4 valine residues (Val). The Asp, Ile and 3 Val residues are N-methylated by the 5 methyltransferase domains from the NRPS (found in modules 3, 5, 6, 7 and 9), whereas the Tyr residue is O-methylated by the cluster encoded O-methyltransferase kk1A. The thioesterase kk1J is likely to be involved in the corrective mechanism of peptide chain synthesis. The D-lactate dehydrogenase kk1H is involved in the synthesis of D-lactic acid from pyruvic acid, which is recognized by the A domain of the first kk1B module. The pyrroline-5-carboxylate reductase kk1I is involved in the synthesis of the L-pipecolic acid residue of KK-1 from delta-1-pyrroline-5-carboxylate (P5C), a metabolic intermediate of lysine. It is still unclear how kk1C and kk1D are involved in the production of KK-1. The chain is O-methyltransferase kk1A from Curvularia clavata.